Consider the following 208-residue polypeptide: FMN-dependent NADH:quinone oxidoreductase (208 aa).

99–102 is an FMN binding site; the sequence is MWNF.

The protein belongs to the azoreductase type 1 family. Homodimer. The cofactor is FMN.

It carries out the reaction 2 a quinone + NADH + H(+) = 2 a 1,4-benzosemiquinone + NAD(+). It catalyses the reaction N,N-dimethyl-1,4-phenylenediamine + anthranilate + 2 NAD(+) = 2-(4-dimethylaminophenyl)diazenylbenzoate + 2 NADH + 2 H(+). Functionally, quinone reductase that provides resistance to thiol-specific stress caused by electrophilic quinones. Also exhibits azoreductase activity. Catalyzes the reductive cleavage of the azo bond in aromatic azo compounds to the corresponding amines. In Brevibacillus brevis (strain 47 / JCM 6285 / NBRC 100599), this protein is FMN-dependent NADH:quinone oxidoreductase.